A 439-amino-acid polypeptide reads, in one-letter code: Xylose isomerase (439 aa).

Catalysis depends on residues His101 and Asp104. Mg(2+) is bound by residues Glu232, Glu268, His271, Asp296, Asp307, Asp309, and Asp339.

It belongs to the xylose isomerase family. Homotetramer. Mg(2+) serves as cofactor.

It is found in the cytoplasm. It catalyses the reaction alpha-D-xylose = alpha-D-xylulofuranose. This chain is Xylose isomerase, found in Pectobacterium atrosepticum (strain SCRI 1043 / ATCC BAA-672) (Erwinia carotovora subsp. atroseptica).